The following is a 1770-amino-acid chain: Vitellogenin (1770 aa).

An N-terminal signal peptide occupies residues 1–16 (MLLLLTLLLFAGTVAA). The Vitellogenin domain maps to 22-809 (WQVGNEYTYL…SEDSVIPRIL (788 aa)). Residues Cys-178 and Cys-222 are joined by a disulfide bond. Residue Asn-296 is glycosylated (N-linked (GlcNAc...) asparagine). Residues 373-394 (SSSSSISSSEENDFWQPKPTLE) are disordered. Residue Asn-1067 is glycosylated (N-linked (GlcNAc...) asparagine). The VWFD domain occupies 1442 to 1635 (TSCMLDKTRA…SYALISNQCE (194 aa)). Disulfide bonds link Cys-1444/Cys-1598 and Cys-1466/Cys-1634.

As to expression, accumulates in the hemolymph. Represents up to 70% of the queen's hemolymph proteins. During the first week of the worker adult life, when it becomes a nurse bee and performs brood-rearing tasks, the vitellogenin titer increases and may account for up to 40% of the total hemolymph proteins.

Its subcellular location is the secreted. Precursor of the egg-yolk proteins that are sources of nutrients during embryonic development. Involved in the differentiation of honeybee larvae into queens. The chain is Vitellogenin (Vg) from Apis mellifera (Honeybee).